The chain runs to 318 residues: MAESLLELKKKIASIQKTGQITEAMRMVSGVKLNRTEKLDQEYTIYNDKVRATVSHLMSSQIVNQLGKETNEYSEFSGQSNIDYSSFFDLGTLASLVQPRKEIKSTGYLVISGDRGLVGSYNSQVIKNMMSIFKDADAQNKDVKILAVGSVAAQFFKKQNLNVVYEYSGVSDVPTYNEVRDIVQTAVKMYLNGVYDELFVCYTHHVNTLTSAFRVESMLPISDIDINHKETMPKDYIIEPDIDSVLKTVLPQFAKSMIFGAILDAKTAEHASSMTAMQSASQNADDVVSGLKTKLNRARQAQITTEITEIIGGANALE.

This sequence belongs to the ATPase gamma chain family. As to quaternary structure, F-type ATPases have 2 components, CF(1) - the catalytic core - and CF(0) - the membrane proton channel. CF(1) has five subunits: alpha(3), beta(3), gamma(1), delta(1), epsilon(1). CF(0) has three main subunits: a, b and c.

It is found in the cell membrane. Produces ATP from ADP in the presence of a proton gradient across the membrane. The gamma chain is believed to be important in regulating ATPase activity and the flow of protons through the CF(0) complex. The polypeptide is ATP synthase gamma chain (Lactobacillus johnsonii (strain CNCM I-12250 / La1 / NCC 533)).